Consider the following 211-residue polypeptide: Glutathione S-transferase class-mu 28 kDa isozyme (211 aa).

A2 bears the N-acetylalanine mark. The region spanning 4-86 is the GST N-terminal domain; it reads EHIKVIYFDG…YMAKKHHMMG (83 aa). Glutathione-binding positions include Y10, 10–11, R16, 41–45, L53, 55–56, and 70–71; these read YF, WPKIK, AV, and ES. The GST C-terminal domain occupies 88 to 211; that stretch reads TDEEYYSVEK…YLSNRPATPF (124 aa).

It belongs to the GST superfamily. Mu family. In terms of assembly, homodimer. In the adult, expressed in excretory epithelial cells but absent from the caecal epithelium and flame cells. Also expressed in the tegument and its extensions into the parenchyma. In the schistosomulum, expressed in the tegument and associated structures. Not expressed in digestive tract, reproductive organs or muscles (at protein level).

It catalyses the reaction RX + glutathione = an S-substituted glutathione + a halide anion + H(+). Its function is as follows. Conjugation of reduced glutathione to a wide number of exogenous and endogenous hydrophobic electrophiles. GST isoenzymes appear to play a central role in the parasite detoxification system. Other functions are also suspected including a role in increasing the solubility of haematin in the parasite gut. This is Glutathione S-transferase class-mu 28 kDa isozyme (GST28) from Schistosoma mansoni (Blood fluke).